The following is a 261-amino-acid chain: MEKRERHFVLVHGACHGAWCWYKVTTFLRSAGHKVTALDLAAAGANGKRLDELNSISDYHEPLMKFMTSLVAGEKVILVAHSLGGVSVSVAMERFPQKISVAVFVSAYMPGPDFNLSTVYQELHQRRQGASKDTQYTFDRGSNNPPTSIIFSPEDLAAKLYQLSPPEDLTLATTLMRPTKLFRGENLLKETTVTREKYGTVRRVYIVCDKDNILKEDFQRWMIKNNPSDEVKVIMGSDHMPMFSKPLDLCAYLQEIVESYS.

One can recognise an AB hydrolase-1 domain in the interval 8–251 (FVLVHGACHG…MFSKPLDLCA (244 aa)). Catalysis depends on serine 82, which acts as the Acyl-ester intermediate. Residues aspartate 211 and histidine 239 each act as charge relay system in the active site.

The protein belongs to the AB hydrolase superfamily. Methylesterase family. In terms of assembly, homodimer.

It carries out the reaction methyl (-)-jasmonate + H2O = jasmonate + methanol + H(+). It catalyses the reaction methyl salicylate + H2O = salicylate + methanol + H(+). It participates in plant hormone biosynthesis. The protein operates within lipid metabolism; oxylipin biosynthesis. Methylesterase that catalyzes the hydrolysis of methyl jasmonate (MeJA) into jasmonate (JA). Can also use methyl salicylate (MeSA) as substrate with a lower efficiency. The polypeptide is Methyl jasmonate esterase 1 (Vitis vinifera (Grape)).